Here is a 1237-residue protein sequence, read N- to C-terminus: Phosphorylase b kinase regulatory subunit alpha, skeletal muscle isoform (1237 aa).

A phosphoserine mark is found at S629, S729, S735, and S758. A calmodulin-binding region spans residues 810-840 (LTELYGKVGKIRHWGLIRYISGILRKKVEAL). Phosphoserine; by autocatalysis is present on S972. The residue at position 981 (S981) is a Phosphoserine. A phosphoserine; by autocatalysis mark is found at S985 and S1007. At S1018 the chain carries Phosphoserine; by PKA. Residues S1020, S1023, and S1030 each carry the phosphoserine modification. The segment at 1021-1069 (TESQPNGGHSLGADLMSPSFLSPGTSVTPSSGSFPGHHTSKDSRQGQWQ) is disordered. Low complexity predominate over residues 1042–1056 (SPGTSVTPSSGSFPG). A calmodulin-binding region spans residues 1060–1100 (SKDSRQGQWQRRRRLDGALNRVPIGFYQKVWKVLQKCHGLS). S1127 bears the Phosphoserine mark. C1234 carries S-farnesyl cysteine lipidation.

It belongs to the phosphorylase b kinase regulatory chain family. In terms of assembly, hexadecamer of 4 heterotetramers, each composed of alpha, beta, gamma, and delta subunits. Alpha (PHKA1 or PHKA2) and beta (PHKB) are regulatory subunits, gamma (PHKG1 or PHKG2) is the catalytic subunit, and delta is calmodulin. Post-translationally, phosphorylation of Ser-1018 by PKA stimulates the dephosphorylation of the beta subunit and, thus, reverses the initial stimulation of PHK by the faster beta-subunit phosphorylation by PKA, that occurs in muscle in response to adrenaline. Cys-1234 is farnesylated, but the C-terminal tripeptide is not removed and the cysteine carboxyl is not methylated. Isoform 1 predominates in muscle, heart, brain and testis. Isoforms 1 and 2 are expressed in similar quantities in the other tissues. Isoform 3 is highly expressed in slow muscle and heart.

Its subcellular location is the cell membrane. Its pathway is glycan biosynthesis; glycogen metabolism. Its activity is regulated as follows. By phosphorylation of various serine residues and by calcium. In terms of biological role, phosphorylase b kinase catalyzes the phosphorylation of serine in certain substrates, including troponin I. The alpha chain may bind calmodulin. The protein is Phosphorylase b kinase regulatory subunit alpha, skeletal muscle isoform (PHKA1) of Oryctolagus cuniculus (Rabbit).